The primary structure comprises 592 residues: Ichor (592 aa).

Polar residues predominate over residues 114-123 (NNNYMQSAYH). Disordered regions lie at residues 114 to 156 (NNNY…VSSS), 343 to 377 (LQNR…QAPT), 416 to 439 (LSNP…MQAS), and 459 to 527 (HTTT…DLSG). Low complexity predominate over residues 124-148 (PQNQSNPTSTTQSNGGSNSNSNNSN). The span at 356–369 (SSGGGGGANQGAGI) shows a compositional bias: gly residues. Residues 459-469 (HTTTASTTGSE) are compositionally biased toward polar residues. Over residues 488-500 (QQQQQQQQQQQQQ) the composition is skewed to low complexity. The segment covering 507–524 (PTTPQMSAISPSGFSASD) has biased composition (polar residues). 2 C2H2-type zinc fingers span residues 536-558 (HRCS…LRTH) and 564-586 (FRCD…QQIH).

Its subcellular location is the nucleus. Transcriptional activator. In tracheal terminal cells, regulates the transcription of factors involved in the formation of a mature apical extracellular matrix (aECM) which is essential for the integrity and shape of seamless tubes. This is Ichor from Drosophila melanogaster (Fruit fly).